Consider the following 485-residue polypeptide: U4/U6 small nuclear ribonucleoprotein Prp31 homolog (485 aa).

Disordered stretches follow at residues 1–36 (MATL…EEDV) and 329–361 (IEKW…RRLR). Residues 11–36 (DLDELSDNEAELDENDGDVGKEEEDV) show a composition bias toward acidic residues. The Nop domain occupies 216–334 (IAPNLSAIVG…IRKKIEKWQE (119 aa)). The span at 334–348 (EPPPARQPKPLPVPD) shows a compositional bias: pro residues. Basic residues predominate over residues 352-361 (KKRRGGRRLR). A Nuclear localization signal motif is present at residues 352 to 365 (KKRRGGRRLRKMKE).

This sequence belongs to the PRP31 family. In terms of assembly, component of the U4/U6-U5 tri-snRNP complex composed of the U4, U6 and U5 snRNAs and pre-mRNA-splicing factors. Interacts with STA1 and SOP1.

The protein localises to the nucleus. It localises to the cajal body. Functionally, involved in pre-mRNA splicing. Required for the assembly of the U4/U5/U6 tri-snRNP complex, one of the building blocks of the spliceosome. Functions in association with STA1 and ZOP1 in spliceosome dynamics and pre-mRNA splicing. Required for transcriptional regulation and pre-mRNA splicing of cold-responsive genes, such as LTI78/RD29A, KIN2/COR6.6 or COR15A, especially under cold stress. May play a role in stress response. Involved in transcriptional gene silencing of endogenous transposable elements, independently of the RNA-directed DNA methylation (RdDM) pathway. Seems not to participate in the small RNA biogenesis of the RdDM pathway. This chain is U4/U6 small nuclear ribonucleoprotein Prp31 homolog, found in Arabidopsis thaliana (Mouse-ear cress).